Here is a 366-residue protein sequence, read N- to C-terminus: tRNA-specific 2-thiouridylase MnmA (366 aa).

ATP contacts are provided by residues 12–19 and Met38; that span reads GMSGGVDS. Residues 98 to 100 are interaction with target base in tRNA; sequence NPD. The active-site Nucleophile is the Cys103. An intrachain disulfide couples Cys103 to Cys200. ATP is bound at residue Gly128. The interval 150 to 152 is interaction with tRNA; it reads KDQ. Catalysis depends on Cys200, which acts as the Cysteine persulfide intermediate. The segment at 312–313 is interaction with tRNA; it reads RY.

Belongs to the MnmA/TRMU family.

It is found in the cytoplasm. The catalysed reaction is S-sulfanyl-L-cysteinyl-[protein] + uridine(34) in tRNA + AH2 + ATP = 2-thiouridine(34) in tRNA + L-cysteinyl-[protein] + A + AMP + diphosphate + H(+). In terms of biological role, catalyzes the 2-thiolation of uridine at the wobble position (U34) of tRNA, leading to the formation of s(2)U34. The polypeptide is tRNA-specific 2-thiouridylase MnmA (Pseudoalteromonas translucida (strain TAC 125)).